A 190-amino-acid chain; its full sequence is Lipid A acyltransferase PagP (190 aa).

Residues 1 to 18 form the signal peptide; the sequence is MKRLISCLTIICALNASA. Residues His60, Asp103, and Ser104 contribute to the active site.

It belongs to the lipid A palmitoyltransferase family. Homodimer.

Its subcellular location is the cell outer membrane. It carries out the reaction a lipid A + a 1,2-diacyl-sn-glycero-3-phosphocholine = a hepta-acyl lipid A + a 2-acyl-sn-glycero-3-phosphocholine. It catalyses the reaction a lipid IVA + a 1,2-diacyl-sn-glycero-3-phosphocholine = a lipid IVB + a 2-acyl-sn-glycero-3-phosphocholine. The catalysed reaction is a lipid IIA + a 1,2-diacyl-sn-glycero-3-phosphocholine = a lipid IIB + a 2-acyl-sn-glycero-3-phosphocholine. Its function is as follows. Transfers a fatty acid residue from the sn-1 position of a phospholipid to the N-linked hydroxyfatty acid chain on the proximal unit of lipid A or its precursors. This Legionella pneumophila subsp. pneumophila (strain Philadelphia 1 / ATCC 33152 / DSM 7513) protein is Lipid A acyltransferase PagP.